A 309-amino-acid polypeptide reads, in one-letter code: Methionyl-tRNA formyltransferase (309 aa).

Residue 109–112 (SLLP) participates in (6S)-5,6,7,8-tetrahydrofolate binding.

This sequence belongs to the Fmt family.

The enzyme catalyses L-methionyl-tRNA(fMet) + (6R)-10-formyltetrahydrofolate = N-formyl-L-methionyl-tRNA(fMet) + (6S)-5,6,7,8-tetrahydrofolate + H(+). Attaches a formyl group to the free amino group of methionyl-tRNA(fMet). The formyl group appears to play a dual role in the initiator identity of N-formylmethionyl-tRNA by promoting its recognition by IF2 and preventing the misappropriation of this tRNA by the elongation apparatus. The polypeptide is Methionyl-tRNA formyltransferase (Clostridium botulinum (strain Alaska E43 / Type E3)).